Reading from the N-terminus, the 214-residue chain is Soluble inorganic pyrophosphatase (214 aa).

The tract at residues 1 to 20 (MSEEDKTAASAEQPKRAPKL) is disordered. Residues K64, R78, and Y90 each coordinate substrate. Mg(2+) is bound by residues D100, D105, and D137. Substrate is bound at residue Y174.

This sequence belongs to the PPase family. It depends on Mg(2+) as a cofactor.

It is found in the cytoplasm. The catalysed reaction is diphosphate + H2O = 2 phosphate + H(+). The protein is Soluble inorganic pyrophosphatase (IPP) of Zea mays (Maize).